A 125-amino-acid polypeptide reads, in one-letter code: Small ribosomal subunit protein uS13 (125 aa).

The protein belongs to the universal ribosomal protein uS13 family. In terms of assembly, part of the 30S ribosomal subunit. Forms a loose heterodimer with protein S19. Forms two bridges to the 50S subunit in the 70S ribosome.

Located at the top of the head of the 30S subunit, it contacts several helices of the 16S rRNA. In the 70S ribosome it contacts the 23S rRNA (bridge B1a) and protein L5 of the 50S subunit (bridge B1b), connecting the 2 subunits; these bridges are implicated in subunit movement. Contacts the tRNAs in the A and P-sites. This is Small ribosomal subunit protein uS13 from Orientia tsutsugamushi (strain Boryong) (Rickettsia tsutsugamushi).